A 51-amino-acid polypeptide reads, in one-letter code: Large ribosomal subunit protein eL39 (51 aa).

Residues K32 to A51 are disordered.

Belongs to the eukaryotic ribosomal protein eL39 family.

In Pyrobaculum arsenaticum (strain DSM 13514 / JCM 11321 / PZ6), this protein is Large ribosomal subunit protein eL39.